Here is a 614-residue protein sequence, read N- to C-terminus: Inactive leucine-rich repeat receptor-like serine/threonine-protein kinase At5g24100 (614 aa).

The signal sequence occupies residues 1 to 21 (MSRGRSFIFYFVLFLFFGSSA). Residues 22-251 (LYSQVTGDLA…KNGIYISEPA (230 aa)) are Extracellular-facing. An N-linked (GlcNAc...) asparagine glycan is attached at N53. LRR repeat units follow at residues 71-95 (GTRV…TISR), 96-120 (LSEL…FLQL), 121-146 (KKLK…TWTN), 148-167 (TVLD…GFAN), 168-190 (LTGL…DLNL), and 191-214 (PGLR…LKRF). N-linked (GlcNAc...) asparagine glycosylation is found at N146, N158, and N167. Residues N197 and N202 are each glycosylated (N-linked (GlcNAc...) asparagine). A helical transmembrane segment spans residues 252–272 (ILGIAISVCFVIFFVIAVVII). The Cytoplasmic portion of the chain corresponds to 273-614 (VCYVKRQRKS…VETLEEIERD (342 aa)). Residues 341-611 (IASAEFLGKG…VKVVETLEEI (271 aa)) form the Protein kinase domain. S343 is subject to Phosphoserine. ATP is bound by residues 347-355 (LGKGVFGMT) and K369. S420 is modified (phosphoserine). T441, T514, and T591 each carry phosphothreonine. An LRR 7 repeat occupies 578 to 601 (AKLLQMLQLGTSCTAMVPAKRPDM).

This sequence belongs to the protein kinase superfamily. Ser/Thr protein kinase family.

It localises to the cell membrane. The protein is Inactive leucine-rich repeat receptor-like serine/threonine-protein kinase At5g24100 of Arabidopsis thaliana (Mouse-ear cress).